Here is a 689-residue protein sequence, read N- to C-terminus: Protein asunder (689 aa).

A coiled-coil region spans residues 521–550; the sequence is NGARLKLSKAKDQYRLLYRELEQLIQLNAT. Disordered stretches follow at residues 591–619 and 669–689; these read SPER…SKRR and KDAV…SVRS. Positions 599–614 are enriched in low complexity; the sequence is SSVGASGSSNSNSLLK. Residues 613–619 carry the Nuclear localization signal (NLS) motif; it reads LKASKRR.

Belongs to the Integrator subunit 13 family. In terms of assembly, belongs to the multiprotein complex Integrator, at least composed of IntS1, IntS2, IntS3, IntS4, omd/IntS5, IntS6, defl/IntS7, IntS8, IntS9, IntS10, IntS11, IntS12, asun/IntS13, IntS14 and IntS15. The core complex associates with protein phosphatase 2A subunits mts/PP2A and Pp2A-29B, to form the Integrator-PP2A (INTAC) complex. In terms of processing, phosphorylated.

Its subcellular location is the nucleus. It localises to the cytoplasm. The protein localises to the perinuclear region. Component of the integrator complex, a multiprotein complex that terminates RNA polymerase II (Pol II) transcription in the promoter-proximal region of genes. The integrator complex provides a quality checkpoint during transcription elongation by driving premature transcription termination of transcripts that are unfavorably configured for transcriptional elongation: the complex terminates transcription by (1) catalyzing dephosphorylation of the C-terminal domain (CTD) of Pol II subunit Polr2A/Rbp1 and Spt5, and (2) degrading the exiting nascent RNA transcript via endonuclease activity. The integrator complex is also involved in the 3'-end processing of the U7 snRNA, and also the spliceosomal snRNAs U1, U2, U4 and U5. The polypeptide is Protein asunder (asun) (Drosophila simulans (Fruit fly)).